Consider the following 285-residue polypeptide: Stress response regulator protein 1 (285 aa).

2 stretches are compositionally biased toward low complexity: residues 43–58 and 128–138; these read DTSS…SSNN and SIISSKSSNKS. Disordered stretches follow at residues 43–66 and 114–142; these read DTSS…SDQQ and PLTP…TTVV. A Response regulatory domain is found at 158-276; it reads SFLIVDDNII…LDFMANSIDD (119 aa). A 4-aspartylphosphate modification is found at Asp209.

Required for stress adaptation, morphogenesis and virulence. This is Stress response regulator protein 1 (SRR1) from Candida dubliniensis (strain CD36 / ATCC MYA-646 / CBS 7987 / NCPF 3949 / NRRL Y-17841) (Yeast).